The chain runs to 310 residues: Ribosomal RNA small subunit methyltransferase H (310 aa).

S-adenosyl-L-methionine-binding positions include 32-34 (AGH), Asp52, Phe79, Asp100, and Gln107.

Belongs to the methyltransferase superfamily. RsmH family.

The protein localises to the cytoplasm. The catalysed reaction is cytidine(1402) in 16S rRNA + S-adenosyl-L-methionine = N(4)-methylcytidine(1402) in 16S rRNA + S-adenosyl-L-homocysteine + H(+). Specifically methylates the N4 position of cytidine in position 1402 (C1402) of 16S rRNA. The sequence is that of Ribosomal RNA small subunit methyltransferase H from Bacillus pumilus (strain SAFR-032).